The sequence spans 360 residues: Galactoside alpha-(1,2)-fucosyltransferase 1 (360 aa).

Residues 1 to 8 (MWAPGHHH) lie on the Cytoplasmic side of the membrane. A helical; Signal-anchor for type II membrane protein transmembrane segment spans residues 9–27 (LCLIFLLTCVFACVFFLLI). Over 28–360 (HQNLFHSGLD…GINADLSPLQ (333 aa)) the chain is Lumenal. N-linked (GlcNAc...) asparagine glycans are attached at residues asparagine 65, asparagine 301, and asparagine 327.

This sequence belongs to the glycosyltransferase 11 family. Expressed in brain, intestine and kidney.

It is found in the golgi apparatus. The protein localises to the golgi stack membrane. The catalysed reaction is a ganglioside GM1 + GDP-beta-L-fucose = a ganglioside Fuc-GM1 + GDP + H(+). It catalyses the reaction a beta-D-galactosyl-(1-&gt;4)-N-acetyl-beta-D-glucosaminyl derivative + GDP-beta-L-fucose = an alpha-L-Fuc-(1-&gt;2)-beta-D-Gal-(1-&gt;4)-beta-D-GlcNAc derivative + GDP + H(+). It carries out the reaction a ganglioside GA1 + GDP-beta-L-fucose = a ganglioside Fuc-GA1 + GDP + H(+). The enzyme catalyses a beta-D-Gal-(1-&gt;3)-beta-D-GlcNAc-(1-&gt;3)-beta-D-Gal-(1-&gt;4)-beta-D-Glc-(1&lt;-&gt;1')-Cer(d18:1(4E)) + GDP-beta-L-fucose = alpha-L-fucosyl-(1-&gt;2)- beta-D-galactosyl-(1-&gt;3)-N-acetyl-beta-D-glucosaminyl-(1-&gt;3)-beta-D-galactosyl-(1-&gt;4)-beta-D-glucosyl-(1&lt;-&gt;1')-N-acylsphing-4-enine + GDP + H(+). The catalysed reaction is a neolactoside nLc4Cer(d18:1(4E)) + GDP-beta-L-fucose = a neolactoside IV(2)-alpha-Fuc-nLc4Cer(d18:1(4E)) + GDP + H(+). It catalyses the reaction beta-D-galactosyl-(1-&gt;3)-N-acetyl-D-galactosamine + GDP-beta-L-fucose = alpha-L-fucosyl-(1-&gt;2)-beta-D-galactosyl-(1-&gt;3)-N-acetyl-D-galactosamine + GDP + H(+). The protein operates within protein modification; protein glycosylation. Functionally, catalyzes the transfer of L-fucose, from a guanosine diphosphate-beta-L-fucose, to the terminal galactose residue of glycoconjugates through an alpha(1,2) linkage leading to H antigen synthesis that is an intermediate substrate in the synthesis of ABO blood group antigens. H antigen is essential for maturation of the glomerular layer of the main olfactory bulb, in cell migration and early cell-cell contacts during tumor associated angiogenesis. Preferentially fucosylates soluble lactose and to a lesser extent, fucosylates glycolipids gangliosides GA1 and GM1a. The chain is Galactoside alpha-(1,2)-fucosyltransferase 1 from Bos taurus (Bovine).